The sequence spans 277 residues: Acetyl-coenzyme A carboxylase carboxyl transferase subunit beta (277 aa).

Residues 22 to 277 enclose the CoA carboxyltransferase N-terminal domain; the sequence is LWTKCPGCNR…TLKQLLYFLT (256 aa). Zn(2+) contacts are provided by Cys-26, Cys-29, Cys-45, and Cys-48. A C4-type zinc finger spans residues 26–48; sequence CPGCNRFLYTKELELNQSVCHYC.

Belongs to the AccD/PCCB family. Acetyl-CoA carboxylase is a heterohexamer composed of biotin carboxyl carrier protein (AccB), biotin carboxylase (AccC) and two subunits each of ACCase subunit alpha (AccA) and ACCase subunit beta (AccD). It depends on Zn(2+) as a cofactor.

It localises to the cytoplasm. The enzyme catalyses N(6)-carboxybiotinyl-L-lysyl-[protein] + acetyl-CoA = N(6)-biotinyl-L-lysyl-[protein] + malonyl-CoA. Its pathway is lipid metabolism; malonyl-CoA biosynthesis; malonyl-CoA from acetyl-CoA: step 1/1. Component of the acetyl coenzyme A carboxylase (ACC) complex. Biotin carboxylase (BC) catalyzes the carboxylation of biotin on its carrier protein (BCCP) and then the CO(2) group is transferred by the transcarboxylase to acetyl-CoA to form malonyl-CoA. This Methylacidiphilum infernorum (isolate V4) (Methylokorus infernorum (strain V4)) protein is Acetyl-coenzyme A carboxylase carboxyl transferase subunit beta.